We begin with the raw amino-acid sequence, 124 residues long: Small ribosomal subunit protein uS12 (124 aa).

Position 89 is a 3-methylthioaspartic acid (aspartate 89).

The protein belongs to the universal ribosomal protein uS12 family. Part of the 30S ribosomal subunit. Contacts proteins S8 and S17. May interact with IF1 in the 30S initiation complex.

Functionally, with S4 and S5 plays an important role in translational accuracy. Its function is as follows. Interacts with and stabilizes bases of the 16S rRNA that are involved in tRNA selection in the A site and with the mRNA backbone. Located at the interface of the 30S and 50S subunits, it traverses the body of the 30S subunit contacting proteins on the other side and probably holding the rRNA structure together. The combined cluster of proteins S8, S12 and S17 appears to hold together the shoulder and platform of the 30S subunit. The chain is Small ribosomal subunit protein uS12 from Shewanella denitrificans (strain OS217 / ATCC BAA-1090 / DSM 15013).